Here is a 379-residue protein sequence, read N- to C-terminus: Thiosulfate/3-mercaptopyruvate sulfurtransferase 1, mitochondrial (379 aa).

Residues 1-56 (MASTLFSRTFLAASHRLITPSLPQKIFNPATFLSRSLHSQLGSASTAYKSTTWARR) constitute a mitochondrion transit peptide. Alanine 57 carries the N-acetylalanine modification. 2 Rhodanese domains span residues 91–208 (REPD…DVES) and 259–373 (EDPT…LPIE). The Cysteine persulfide intermediate role is filled by cysteine 333.

In terms of tissue distribution, expressed in roots, rosette and cauline leaves, stems, flowers and siliques.

The protein localises to the mitochondrion. The catalysed reaction is thiosulfate + hydrogen cyanide = thiocyanate + sulfite + 2 H(+). It catalyses the reaction 2-oxo-3-sulfanylpropanoate + [thioredoxin]-dithiol = [thioredoxin]-disulfide + hydrogen sulfide + pyruvate + H(+). Functionally, catalyzes the transfer of a sulfur ion from a donor to cyanide or to other thiol compounds. Substrate preference is 3-mercaptopyruvate &gt; thiosulfate. Involved in embryo and seed development. The protein is Thiosulfate/3-mercaptopyruvate sulfurtransferase 1, mitochondrial (STR1) of Arabidopsis thaliana (Mouse-ear cress).